Reading from the N-terminus, the 309-residue chain is Malate dehydrogenase (309 aa).

Residues 9–14 (GAGFVG) and Asp-33 contribute to the NAD(+) site. Substrate is bound by residues Arg-82 and Arg-88. NAD(+)-binding positions include Asn-95 and 118–120 (VNN). Substrate-binding residues include Asn-120 and Arg-151. His-175 (proton acceptor) is an active-site residue.

The protein belongs to the LDH/MDH superfamily. MDH type 3 family.

It carries out the reaction (S)-malate + NAD(+) = oxaloacetate + NADH + H(+). Catalyzes the reversible oxidation of malate to oxaloacetate. This chain is Malate dehydrogenase, found in Roseiflexus sp. (strain RS-1).